The following is a 508-amino-acid chain: Photosystem II CP47 reaction center protein (508 aa).

6 helical membrane-spanning segments follow: residues 21 to 36 (SVHI…WAGS), 101 to 115 (IMFS…IWHW), 140 to 156 (GIHL…FGAF), 203 to 218 (IAAG…FHLS), 237 to 252 (VLSS…AFVV), and 457 to 472 (SFAL…HGAR).

This sequence belongs to the PsbB/PsbC family. PsbB subfamily. PSII is composed of 1 copy each of membrane proteins PsbA, PsbB, PsbC, PsbD, PsbE, PsbF, PsbH, PsbI, PsbJ, PsbK, PsbL, PsbM, PsbT, PsbX, PsbY, PsbZ, Psb30/Ycf12, at least 3 peripheral proteins of the oxygen-evolving complex and a large number of cofactors. It forms dimeric complexes. Binds multiple chlorophylls. PSII binds additional chlorophylls, carotenoids and specific lipids. serves as cofactor.

The protein localises to the plastid. It is found in the chloroplast thylakoid membrane. In terms of biological role, one of the components of the core complex of photosystem II (PSII). It binds chlorophyll and helps catalyze the primary light-induced photochemical processes of PSII. PSII is a light-driven water:plastoquinone oxidoreductase, using light energy to abstract electrons from H(2)O, generating O(2) and a proton gradient subsequently used for ATP formation. The chain is Photosystem II CP47 reaction center protein from Guizotia abyssinica (Niger).